The sequence spans 537 residues: Chaperonin GroEL (537 aa).

Residues 30 to 33, 87 to 91, glycine 414, 477 to 479, and aspartate 493 contribute to the ATP site; these read TLGP, DGTTT, and DAV.

The protein belongs to the chaperonin (HSP60) family. Forms a cylinder of 14 subunits composed of two heptameric rings stacked back-to-back. Interacts with the co-chaperonin GroES.

Its subcellular location is the cytoplasm. The enzyme catalyses ATP + H2O + a folded polypeptide = ADP + phosphate + an unfolded polypeptide.. Together with its co-chaperonin GroES, plays an essential role in assisting protein folding. The GroEL-GroES system forms a nano-cage that allows encapsulation of the non-native substrate proteins and provides a physical environment optimized to promote and accelerate protein folding. The chain is Chaperonin GroEL from Coprothermobacter proteolyticus (strain ATCC 35245 / DSM 5265 / OCM 4 / BT).